The sequence spans 411 residues: Serine hydroxymethyltransferase (411 aa).

(6S)-5,6,7,8-tetrahydrofolate is bound by residues Leu-113 and 117-119 (GHL). Lys-222 carries the post-translational modification N6-(pyridoxal phosphate)lysine. Residue 346-348 (SPF) participates in (6S)-5,6,7,8-tetrahydrofolate binding.

This sequence belongs to the SHMT family. In terms of assembly, homodimer. The cofactor is pyridoxal 5'-phosphate.

The protein resides in the cytoplasm. The enzyme catalyses (6R)-5,10-methylene-5,6,7,8-tetrahydrofolate + glycine + H2O = (6S)-5,6,7,8-tetrahydrofolate + L-serine. The protein operates within one-carbon metabolism; tetrahydrofolate interconversion. It functions in the pathway amino-acid biosynthesis; glycine biosynthesis; glycine from L-serine: step 1/1. In terms of biological role, catalyzes the reversible interconversion of serine and glycine with tetrahydrofolate (THF) serving as the one-carbon carrier. This reaction serves as the major source of one-carbon groups required for the biosynthesis of purines, thymidylate, methionine, and other important biomolecules. Also exhibits THF-independent aldolase activity toward beta-hydroxyamino acids, producing glycine and aldehydes, via a retro-aldol mechanism. In Prochlorococcus marinus (strain NATL2A), this protein is Serine hydroxymethyltransferase.